The chain runs to 44 residues: MRDFKTYLSVAPVLSTLWFGALAGLLIEINRFFPDALTFPFFSF.

A helical transmembrane segment spans residues 7-27 (YLSVAPVLSTLWFGALAGLLI).

Belongs to the PsaJ family.

The protein resides in the plastid. It localises to the chloroplast thylakoid membrane. May help in the organization of the PsaE and PsaF subunits. The polypeptide is Photosystem I reaction center subunit IX (Coffea arabica (Arabian coffee)).